A 502-amino-acid polypeptide reads, in one-letter code: DEP domain-containing protein 7 (502 aa).

Residues 37-127 (LQTQVEVKKR…SSCSLYRFTT (91 aa)) enclose the DEP domain.

It belongs to the DEPDC7 family.

In Macaca fascicularis (Crab-eating macaque), this protein is DEP domain-containing protein 7 (DEPDC7).